The primary structure comprises 341 residues: Putative methyltransferase YGR283C (341 aa).

It belongs to the class IV-like SAM-binding methyltransferase superfamily.

It localises to the nucleus. The protein resides in the nucleolus. The protein is Putative methyltransferase YGR283C of Saccharomyces cerevisiae (strain ATCC 204508 / S288c) (Baker's yeast).